A 276-amino-acid chain; its full sequence is Putative aliphatic sulfonates transport permease protein SsuC (276 aa).

7 helical membrane-spanning segments follow: residues 32–52 (GLLL…LGVV), 54–74 (ATVL…ILSG), 87–107 (AALG…LAGF), 119–141 (LQML…FGFD), 146–168 (ILLI…IRGV), 199–219 (ILLG…VAEL), and 242–262 (VFAG…FVRL). Residues 80–260 (LQISIYRAAL…VVGKLTDSFV (181 aa)) form the ABC transmembrane type-1 domain.

This sequence belongs to the binding-protein-dependent transport system permease family. CysTW subfamily.

Its subcellular location is the cell membrane. Its function is as follows. Part of a binding-protein-dependent transport system for aliphatic sulfonates. Probably responsible for the translocation of the substrate across the membrane. The chain is Putative aliphatic sulfonates transport permease protein SsuC (ssuC) from Bacillus subtilis (strain 168).